We begin with the raw amino-acid sequence, 234 residues long: Proteasome subunit alpha (234 aa).

Belongs to the peptidase T1A family. In terms of assembly, the 20S proteasome core is composed of 14 alpha and 14 beta subunits that assemble into four stacked heptameric rings, resulting in a barrel-shaped structure. The two inner rings, each composed of seven catalytic beta subunits, are sandwiched by two outer rings, each composed of seven alpha subunits. The catalytic chamber with the active sites is on the inside of the barrel. Has a gated structure, the ends of the cylinder being occluded by the N-termini of the alpha-subunits. Is capped at one or both ends by the proteasome regulatory ATPase, PAN.

The protein localises to the cytoplasm. With respect to regulation, the formation of the proteasomal ATPase PAN-20S proteasome complex, via the docking of the C-termini of PAN into the intersubunit pockets in the alpha-rings, triggers opening of the gate for substrate entry. Interconversion between the open-gate and close-gate conformations leads to a dynamic regulation of the 20S proteasome proteolysis activity. In terms of biological role, component of the proteasome core, a large protease complex with broad specificity involved in protein degradation. In Picrophilus torridus (strain ATCC 700027 / DSM 9790 / JCM 10055 / NBRC 100828 / KAW 2/3), this protein is Proteasome subunit alpha.